The primary structure comprises 314 residues: Deoxymugineic acid synthase 1-A (314 aa).

The segment at 1-21 is disordered; it reads MGAGDKTAAGMPRIGMGTAVQ. Residue D44 coordinates NADP(+). Catalysis depends on Y49, which acts as the Proton donor. Position 112 (H112) interacts with substrate. NADP(+)-binding positions include 158 to 159, Q180, 258 to 266, and 273 to 281; these read AN, FDEARMREN, and ELTEEEHRR.

This sequence belongs to the aldo/keto reductase family. Mostly expressed in root tissues, observed in mesocotyl and embryonic roots, seedling roots, crown and seedling leafes, mature bracts, anthers, pistil, caryopsis and embryos.

The enzyme catalyses 2'-deoxymugineate + NAD(+) = 3''-deamino-3''-oxonicotianamine + NADH + H(+). It catalyses the reaction 2'-deoxymugineate + NADP(+) = 3''-deamino-3''-oxonicotianamine + NADPH + H(+). It functions in the pathway siderophore biosynthesis. Catalyzes the reduction of a 3''-keto intermediate during the biosynthesis of 2'-deoxymugineic acid (DMA) from L-Met. Involved in the formation of phytosiderophores (MAs) belonging to the mugineic acid family and required to acquire iron. In Triticum aestivum (Wheat), this protein is Deoxymugineic acid synthase 1-A.